The chain runs to 677 residues: Protein windpipe (677 aa).

The N-terminal stretch at 1–20 (MERVHLTAWLALFLIVVANA) is a signal peptide. Topologically, residues 21-451 (TPTPARTPTG…IGKPKDDSSA (431 aa)) are extracellular. 2 N-linked (GlcNAc...) asparagine glycosylation sites follow: N53 and N80. 4 LRR repeats span residues 91-116 (LPELTSADLSHNQLKDLGHLGKGLKR), 118-133 (NLKHNQLTSDKLRKLP), 134-156 (QHLQVLNLQHNNITHLPLELTHM), and 158-183 (QLHQLELSHNAINCSCQTLEVRNWLV). N-linked (GlcNAc...) asparagine glycans are attached at residues N145 and N170. The 33-residue stretch at 184–216 (ERIVYMEHPVVCSYPLEFRGRSWLQLKQDEICK) folds into the LRRCT domain. 3 disordered regions span residues 264–285 (AKKVRSPQIPLPSDQVEGSGDL), 298–317 (TVAEPEAAESQLVDAAASPS), and 325–385 (KDED…TVFS). Over residues 347–372 (SKVKITSEDDIDSDGKPEESDVRPLE) the composition is skewed to basic and acidic residues. Polar residues predominate over residues 374 to 385 (PENSENPDTVFS). Residues 452 to 472 (IYYLLAVIGLIVVGLVLFVAI) form a helical membrane-spanning segment. The Cytoplasmic segment spans residues 473–677 (KRCKYDSNAA…EPTHQVINGH (205 aa)). Disordered regions lie at residues 502-523 (LGKPLHKNGHGNGQEHSPLIGE) and 539-677 (NGEA…INGH). Over residues 595–607 (AQQQQLAEQNNNE) the composition is skewed to low complexity.

Interacts with dome; the interaction promotes internalization of dome and its subsequent lysosomal degradation. In terms of tissue distribution, in adult intestine, expressed in both small progenitor cells and large nuclei enterocytes (at protein level). During embryogenesis, restricted to the developing trachea.

It is found in the cell membrane. Functionally, plays a role in negative regulation of the JAK/STAT pathway by binding to the receptor dome and promoting its internalization for subsequent lysosomal degradation, thereby reducing JAK/STAT signaling. This Drosophila melanogaster (Fruit fly) protein is Protein windpipe.